A 326-amino-acid chain; its full sequence is Guanine nucleotide-binding protein subunit beta-like protein 1 (326 aa).

6 WD repeats span residues 17-61, 64-104, 159-202, 205-244, 250-291, and 292-325; these read GTQS…IVTT, GHGG…NTIM, ARPG…VCSQ, CHEE…SLQV, LTNP…AVLA, and FHSA…LYPC.

Expressed at low levels in most tissues and highly expressed in adult testis. Widely expressed in adult brain with striking regional distribution in forebrain, midbrain, and hindbrain structures, including the thalamus, hypothalamus, amygdala, hippocampus, pons.

It is found in the cytoplasm. It localises to the nucleus. Functionally, acts as a critical regulator of DNA damage response (DDR) signaling via specifically regulating phosphatidylinositol 3-kinase-related protein kinase (PIKK) family proteins. In Mus musculus (Mouse), this protein is Guanine nucleotide-binding protein subunit beta-like protein 1 (Gnb1l).